The chain runs to 201 residues: Glycerol-3-phosphate acyltransferase (201 aa).

Transmembrane regions (helical) follow at residues 4 to 24 (IASL…LVSL), 84 to 104 (EIAM…FLAF), 116 to 136 (VLLA…LAVA), and 157 to 177 (AWFI…LLLV).

Belongs to the PlsY family. As to quaternary structure, probably interacts with PlsX.

It localises to the cell inner membrane. The enzyme catalyses an acyl phosphate + sn-glycerol 3-phosphate = a 1-acyl-sn-glycero-3-phosphate + phosphate. The protein operates within lipid metabolism; phospholipid metabolism. In terms of biological role, catalyzes the transfer of an acyl group from acyl-phosphate (acyl-PO(4)) to glycerol-3-phosphate (G3P) to form lysophosphatidic acid (LPA). This enzyme utilizes acyl-phosphate as fatty acyl donor, but not acyl-CoA or acyl-ACP. This is Glycerol-3-phosphate acyltransferase from Laribacter hongkongensis (strain HLHK9).